The chain runs to 568 residues: MAGUK p55 subfamily member 3 (568 aa).

L27 domains follow at residues 6-60 (EDSG…ERQS) and 61-118 (PTPV…FDPV). The PDZ domain occupies 137–218 (IVRLVKNKEP…SITLKIIPAT (82 aa)). Positions 226–296 (DSKVFMRALF…PSKQFQERRL (71 aa)) constitute an SH3 domain. S307 bears the Phosphoserine mark. One can recognise a Guanylate kinase-like domain in the interval 385 to 568 (PRLVVLIGSL…QEPAASSELS (184 aa)).

This sequence belongs to the MAGUK family. In terms of assembly, interacts with HTR2C; this interaction stabilizes the receptor at the plasma membrane and prevents the desensitization of the HTR2C receptor-mediated calcium response. Interacts with HTR2A. Interacts with HTR4. Interacts (via PDZ domain) with CADM1 (via C-terminus)Interacts (via PDZ domain) with CADM1; this interaction connects CADM1 with DLG1. Interacts (via Guanylate kinase-like domain) with PALS1. Interacts with DLG1 (via N-terminus); this interaction connects CADM1 with DLG1 and links CADM1 with the regulatory subunit of phosphoinositide-3-kinase (PI3K) by forming a multiprotein complex and participates in cell spreading. Expressed in brain, skeletal muscle, testis, kidney, and lung.

The protein localises to the apical cell membrane. It localises to the cell membrane. Its subcellular location is the cell junction. It is found in the adherens junction. Its function is as follows. Participates in cell spreading through the phosphoinositide-3-kinase (PI3K) pathway by connecting CADM1 to DLG1 and the regulatory subunit of phosphoinositide-3-kinase (PI3K). Stabilizes HTR2C at the plasma membrane and prevents its desensitization. May participates in the maintenance of adherens junctions. The chain is MAGUK p55 subfamily member 3 from Mus musculus (Mouse).